The primary structure comprises 382 residues: Alkanesulfonate monooxygenase (382 aa).

Belongs to the SsuD family. In terms of assembly, homotetramer.

It catalyses the reaction an alkanesulfonate + FMNH2 + O2 = an aldehyde + FMN + sulfite + H2O + 2 H(+). Functionally, catalyzes the desulfonation of aliphatic sulfonates. The polypeptide is Alkanesulfonate monooxygenase (Buttiauxella sp. (strain PNBS)).